A 392-amino-acid chain; its full sequence is MLPNGEDDSDLLRLVKELQAYLVRNDKLEKENHELRQEVARLRAQVSNLKSHENERKSMLWKKLQSSYDGSNTDGSNLKAPESVKSNTKGQEVRNPNPKPTIQGQSTATKPPPPPPLPSKRTLGKRSVRRAPEVVEFYRALTKRESHMGNKINQNGVLSPAFNRNMIGEIENRSKYLSDIKSDTDRHRDHIHILISKVEAATFTDISEVETFVKWIDEELSSLVDERAVLKHFPKWPERKVDSLREAACNYKRPKNLGNEILSFKDNPKDSLTQALQRIQSLQDRLEESVNNTEKMRDSTGKRYKDFQIPWEWMLDTGLIGQLKYSSLRLAQEYMKRIAKELESNGSGKEGNLMLQGVRFAYTIHQFAGGFDGETLSIFHELKKITTGETRG.

Residues Leu11–His52 adopt a coiled-coil conformation. Composition is skewed to polar residues over residues Gln65–Ser76 and Pro100–Thr109. A disordered region spans residues Gln65–Val128. The stretch at Lys269–Ser299 forms a coiled coil.

This sequence belongs to the IPGA1 family.

The protein resides in the cytoplasm. It is found in the cytoskeleton. Its function is as follows. Microtubule-associated protein probably involved in the regulation of microtubule organization. The chain is INCREASED PETAL GROWTH ANISOTROPY 1-like protein 1 from Arabidopsis thaliana (Mouse-ear cress).